The following is a 397-amino-acid chain: DNA-directed RNA polymerase subunit Rpo1C (397 aa).

This sequence belongs to the RNA polymerase beta' chain family. In terms of assembly, part of the RNA polymerase complex. An artificial construct of the RNAP clamp domain (including part of this protein) contacts transcription elongation factors Spt4 and Spt5.

Its subcellular location is the cytoplasm. It catalyses the reaction RNA(n) + a ribonucleoside 5'-triphosphate = RNA(n+1) + diphosphate. Its function is as follows. DNA-dependent RNA polymerase (RNAP) catalyzes the transcription of DNA into RNA using the four ribonucleoside triphosphates as substrates. Forms part of the jaw domain. The polypeptide is DNA-directed RNA polymerase subunit Rpo1C (Pyrococcus furiosus (strain ATCC 43587 / DSM 3638 / JCM 8422 / Vc1)).